The sequence spans 723 residues: MRTLLVDNYDSFTYNLFHYLSRANGREPEVIRNDDPAWRPGLLDAFDNVVLSPGPGTPHRPADFGLCARIAEEGRLPVLGVCLGHQGMALAHGARVGRAPEPRHGRTSAVRHDGTGLFEGLPQPLEVVRYHSLAVTELPPELEATAWSEDGVLMALRHRTLPLWGVQFHPESIGTQDGHRLLANFRDLTERHGRTRHGGRAGHGTLPPPAPARETKATTGTPRRLRVIAKSLPTRWDAEVAFDSLFRTGDHPFWLDSSRPGGELGQLSMMGDASGPLARTAKADVHAGTVTVRADGASSTVESAFLTWLENDLAGLRTEVPELPFAFALGWVGCLGYELKAECDGDAAHRSPDPDAVLVFADRALVLDHRTRTTYLLALVEDDAEAEARAWLAAASATLDAVAGREPEPCPEAPVCTTGPVELRHDRDGYLKLIDVCQQEIAAGETYEVCLTNMAEADTDLTPWAAYRALRRVSPAPFAAFLDFGPMAVLSSSPERFLRIDRHGRMESKPIKGTRPRGATPQEDAALVRALATCEKDRAENLMIVDLVRHDLGRCAEVGSVVADPVFQVETYATVHQLVSTVTARLREDSSPVAAVRAAFPGGSMTGAPKIRTMQIIDRLEGGPRGVYSGAIGYFSLTGAVDLSIVIRTVVLSGGRLRYGVGGAVIALSDPADEFEETAVKAAPLLRLLDTAFPGRERPGKDLDGEPDDGTDAGAPKDLVLPG.

The Glutamine amidotransferase type-1 domain maps to Arg2 to Thr195. Cys82 serves as the catalytic Nucleophile. The disordered stretch occupies residues Val96 to Leu117. Residues Arg98–Gly114 are compositionally biased toward basic and acidic residues. Catalysis depends on residues His169 and Glu171. Disordered regions lie at residues His192–Thr219 and Phe693–Gly723. Residues Leu255–Gly723 form a PABB component region. Over residues Gly695–Asp704 the composition is skewed to basic and acidic residues.

This sequence in the C-terminal section; belongs to the anthranilate synthase component I family.

The enzyme catalyses chorismate + L-glutamine = 4-amino-4-deoxychorismate + L-glutamate. The protein operates within antibiotic biosynthesis; candicidin biosynthesis. In terms of biological role, involved in candicidin biosynthesis. Catalyzes the biosynthesis of 4-amino-4-deoxychorismate (ADC) from chorismate and glutamine. The chain is Aminodeoxychorismate synthase from Streptomyces griseus.